A 427-amino-acid polypeptide reads, in one-letter code: Glutamate-1-semialdehyde 2,1-aminomutase (427 aa).

Lys265 carries the N6-(pyridoxal phosphate)lysine modification.

This sequence belongs to the class-III pyridoxal-phosphate-dependent aminotransferase family. HemL subfamily. In terms of assembly, homodimer. Pyridoxal 5'-phosphate serves as cofactor.

It is found in the cytoplasm. It carries out the reaction (S)-4-amino-5-oxopentanoate = 5-aminolevulinate. Its pathway is porphyrin-containing compound metabolism; protoporphyrin-IX biosynthesis; 5-aminolevulinate from L-glutamyl-tRNA(Glu): step 2/2. The chain is Glutamate-1-semialdehyde 2,1-aminomutase from Burkholderia cenocepacia (strain HI2424).